The chain runs to 441 residues: Enolase (441 aa).

Q164 is a (2R)-2-phosphoglycerate binding site. Catalysis depends on E206, which acts as the Proton donor. D243, E289, and D316 together coordinate Mg(2+). Residues K341, R370, S371, and K392 each coordinate (2R)-2-phosphoglycerate. K341 functions as the Proton acceptor in the catalytic mechanism.

The protein belongs to the enolase family. Mg(2+) is required as a cofactor.

Its subcellular location is the cytoplasm. The protein localises to the secreted. It is found in the cell surface. The enzyme catalyses (2R)-2-phosphoglycerate = phosphoenolpyruvate + H2O. It participates in carbohydrate degradation; glycolysis; pyruvate from D-glyceraldehyde 3-phosphate: step 4/5. Catalyzes the reversible conversion of 2-phosphoglycerate (2-PG) into phosphoenolpyruvate (PEP). It is essential for the degradation of carbohydrates via glycolysis. The polypeptide is Enolase (Leuconostoc citreum (strain KM20)).